Reading from the N-terminus, the 211-residue chain is Large ribosomal subunit protein uL4 (211 aa).

Residues 40-85 are disordered; that stretch reads QQAHSRQGTASTLTRSEVRGGGRKPYKQKGTGRARQGSVRTPLRPG. A compositionally biased stretch (polar residues) spans 41-54; that stretch reads QAHSRQGTASTLTR. Over residues 60–71 the composition is skewed to basic residues; the sequence is GGRKPYKQKGTG.

Belongs to the universal ribosomal protein uL4 family. In terms of assembly, part of the 50S ribosomal subunit.

Functionally, one of the primary rRNA binding proteins, this protein initially binds near the 5'-end of the 23S rRNA. It is important during the early stages of 50S assembly. It makes multiple contacts with different domains of the 23S rRNA in the assembled 50S subunit and ribosome. Its function is as follows. Forms part of the polypeptide exit tunnel. This Synechococcus sp. (strain CC9311) protein is Large ribosomal subunit protein uL4.